A 220-amino-acid chain; its full sequence is Cell division protein SepF (220 aa).

Residues G33–P82 are disordered. The segment covering Y52–D70 has biased composition (basic and acidic residues).

This sequence belongs to the SepF family. As to quaternary structure, homodimer. Interacts with FtsZ.

The protein localises to the cytoplasm. Functionally, cell division protein that is part of the divisome complex and is recruited early to the Z-ring. Probably stimulates Z-ring formation, perhaps through the cross-linking of FtsZ protofilaments. Its function overlaps with FtsA. The sequence is that of Cell division protein SepF from Mycobacterium sp. (strain JLS).